A 224-amino-acid polypeptide reads, in one-letter code: MNGNKLVFLPKKSYHQLFNITFSAMMLALAIITSLISEFISIPFFSQLKLTFDISVVFLVACAFFVSLGWSLTITLASALTSFFWNTNNVIGVLTVTLANLSTILFTRLYFCLFSKRRFCWIFVFLFTTLSNALLLTTLNGILITPLFWYYFGYVQTPNFLIVAEQYNKNTDFHFFFFGINNYWLGIFCLYSFFNLVKFGLVSCFGVPIMRSFQKFYWKRALAK.

Transmembrane regions (helical) follow at residues 25 to 45 (MMLALAIITSLISEFISIPFF), 54 to 74 (ISVVFLVACAFFVSLGWSLTI), 91 to 111 (IGVLTVTLANLSTILFTRLYF), 119 to 139 (FCWIFVFLFTTLSNALLLTTL), 142 to 162 (ILITPLFWYYFGYVQTPNFLI), and 174 to 194 (HFFFFGINNYWLGIFCLYSFF).

It is found in the cell membrane. This is an uncharacterized protein from Mycoplasma genitalium (strain ATCC 33530 / DSM 19775 / NCTC 10195 / G37) (Mycoplasmoides genitalium).